Consider the following 137-residue polypeptide: Endoribonuclease YbeY (137 aa).

Zn(2+) is bound by residues His103, His107, and His113.

It belongs to the endoribonuclease YbeY family. Zn(2+) serves as cofactor.

Its subcellular location is the cytoplasm. Its function is as follows. Single strand-specific metallo-endoribonuclease involved in late-stage 70S ribosome quality control and in maturation of the 3' terminus of the 16S rRNA. This is Endoribonuclease YbeY from Acholeplasma laidlawii (strain PG-8A).